The chain runs to 256 residues: Triosephosphate isomerase (256 aa).

Residue 9 to 11 (NWK) coordinates substrate. Catalysis depends on H97, which acts as the Electrophile. E169 (proton acceptor) is an active-site residue. Residues G175, S214, and 235–236 (GG) each bind substrate.

It belongs to the triosephosphate isomerase family. As to quaternary structure, homodimer.

The protein resides in the cytoplasm. The catalysed reaction is D-glyceraldehyde 3-phosphate = dihydroxyacetone phosphate. It participates in carbohydrate biosynthesis; gluconeogenesis. Its pathway is carbohydrate degradation; glycolysis; D-glyceraldehyde 3-phosphate from glycerone phosphate: step 1/1. Its function is as follows. Involved in the gluconeogenesis. Catalyzes stereospecifically the conversion of dihydroxyacetone phosphate (DHAP) to D-glyceraldehyde-3-phosphate (G3P). The sequence is that of Triosephosphate isomerase from Moritella marina (Vibrio marinus).